We begin with the raw amino-acid sequence, 180 residues long: Bifunctional protein PyrR (180 aa).

The PRPP-binding motif lies at 99 to 111 (VILVDDVLYTCRT).

This sequence belongs to the purine/pyrimidine phosphoribosyltransferase family. PyrR subfamily. Homodimer and homohexamer; in equilibrium.

The enzyme catalyses UMP + diphosphate = 5-phospho-alpha-D-ribose 1-diphosphate + uracil. Its function is as follows. Regulates transcriptional attenuation of the pyrimidine nucleotide (pyr) operon by binding in a uridine-dependent manner to specific sites on pyr mRNA. This disrupts an antiterminator hairpin in the RNA and favors formation of a downstream transcription terminator, leading to a reduced expression of downstream genes. Also displays a weak uracil phosphoribosyltransferase activity which is not physiologically significant. The chain is Bifunctional protein PyrR from Clostridium botulinum (strain Alaska E43 / Type E3).